Consider the following 388-residue polypeptide: Succinate--CoA ligase [ADP-forming] subunit beta (388 aa).

An ATP-grasp domain is found at 9–244; that stretch reads KQLFARYGLP…QSQEDPREAQ (236 aa). Residues lysine 46, 53–55, glutamate 99, threonine 102, and glutamate 107 each bind ATP; that span reads GRG. Positions 199 and 213 each coordinate Mg(2+). Substrate is bound by residues asparagine 264 and 321 to 323; that span reads GIV.

The protein belongs to the succinate/malate CoA ligase beta subunit family. In terms of assembly, heterotetramer of two alpha and two beta subunits. It depends on Mg(2+) as a cofactor.

It catalyses the reaction succinate + ATP + CoA = succinyl-CoA + ADP + phosphate. The enzyme catalyses GTP + succinate + CoA = succinyl-CoA + GDP + phosphate. It functions in the pathway carbohydrate metabolism; tricarboxylic acid cycle; succinate from succinyl-CoA (ligase route): step 1/1. Succinyl-CoA synthetase functions in the citric acid cycle (TCA), coupling the hydrolysis of succinyl-CoA to the synthesis of either ATP or GTP and thus represents the only step of substrate-level phosphorylation in the TCA. The beta subunit provides nucleotide specificity of the enzyme and binds the substrate succinate, while the binding sites for coenzyme A and phosphate are found in the alpha subunit. The sequence is that of Succinate--CoA ligase [ADP-forming] subunit beta from Escherichia coli O8 (strain IAI1).